The sequence spans 268 residues: Pantothenate synthetase (268 aa).

18 to 25 (MGYLHEGH) serves as a coordination point for ATP. His25 serves as the catalytic Proton donor. A (R)-pantoate-binding site is contributed by Gln49. Beta-alanine is bound at residue Gln49. 135-138 (GQKD) lines the ATP pocket. Residue Gln141 participates in (R)-pantoate binding. ATP-binding positions include Val164 and 172-175 (LSSR).

It belongs to the pantothenate synthetase family. Homodimer.

Its subcellular location is the cytoplasm. The catalysed reaction is (R)-pantoate + beta-alanine + ATP = (R)-pantothenate + AMP + diphosphate + H(+). Its pathway is cofactor biosynthesis; (R)-pantothenate biosynthesis; (R)-pantothenate from (R)-pantoate and beta-alanine: step 1/1. In terms of biological role, catalyzes the condensation of pantoate with beta-alanine in an ATP-dependent reaction via a pantoyl-adenylate intermediate. The polypeptide is Pantothenate synthetase (Dehalococcoides mccartyi (strain ATCC BAA-2266 / KCTC 15142 / 195) (Dehalococcoides ethenogenes (strain 195))).